We begin with the raw amino-acid sequence, 114 residues long: MGTRLFFYVALCLLWTGHMDAGITQSPRHKVTETGTPVTLRCHQTENHRYMYWYRQDPGHGLRLIHYSYGVKDTDKGEVSDGYSVSRSKTEDFLLTLESATSSQTSVYFCAISE.

Residues 1–21 (MGTRLFFYVALCLLWTGHMDA) form the signal peptide. The Ig-like domain occupies 22–114 (GITQSPRHKV…TSVYFCAISE (93 aa)). Residues cysteine 42 and cysteine 110 are joined by a disulfide bond.

Alpha-beta TR is a heterodimer composed of an alpha and beta chain; disulfide-linked. The alpha-beta TR is associated with the transmembrane signaling CD3 coreceptor proteins to form the TR-CD3 (TcR or TCR). The assembly of alpha-beta TR heterodimers with CD3 occurs in the endoplasmic reticulum where a single alpha-beta TR heterodimer associates with one CD3D-CD3E heterodimer, one CD3G-CD3E heterodimer and one CD247 homodimer forming a stable octameric structure. CD3D-CD3E and CD3G-CD3E heterodimers preferentially associate with TR alpha and TR beta chains, respectively. The association of the CD247 homodimer is the last step of TcR assembly in the endoplasmic reticulum and is required for transport to the cell surface.

It localises to the cell membrane. In terms of biological role, v region of the variable domain of T cell receptor (TR) beta chain that participates in the antigen recognition. Alpha-beta T cell receptors are antigen specific receptors which are essential to the immune response and are present on the cell surface of T lymphocytes. Recognize peptide-major histocompatibility (MH) (pMH) complexes that are displayed by antigen presenting cells (APC), a prerequisite for efficient T cell adaptive immunity against pathogens. Binding of alpha-beta TR to pMH complex initiates TR-CD3 clustering on the cell surface and intracellular activation of LCK that phosphorylates the ITAM motifs of CD3G, CD3D, CD3E and CD247 enabling the recruitment of ZAP70. In turn ZAP70 phosphorylates LAT, which recruits numerous signaling molecules to form the LAT signalosome. The LAT signalosome propagates signal branching to three major signaling pathways, the calcium, the mitogen-activated protein kinase (MAPK) kinase and the nuclear factor NF-kappa-B (NF-kB) pathways, leading to the mobilization of transcription factors that are critical for gene expression and essential for T cell growth and differentiation. The T cell repertoire is generated in the thymus, by V-(D)-J rearrangement. This repertoire is then shaped by intrathymic selection events to generate a peripheral T cell pool of self-MH restricted, non-autoaggressive T cells. Post-thymic interaction of alpha-beta TR with the pMH complexes shapes TR structural and functional avidity. This chain is T cell receptor beta variable 10-3, found in Homo sapiens (Human).